A 351-amino-acid chain; its full sequence is Histidinol-phosphate aminotransferase (351 aa).

The segment at 1–26 (MRFRAELEPLSPYNPPRASQEAAAER) is disordered. Residue Lys-223 is modified to N6-(pyridoxal phosphate)lysine.

Belongs to the class-II pyridoxal-phosphate-dependent aminotransferase family. Histidinol-phosphate aminotransferase subfamily. Homodimer. The cofactor is pyridoxal 5'-phosphate.

It carries out the reaction L-histidinol phosphate + 2-oxoglutarate = 3-(imidazol-4-yl)-2-oxopropyl phosphate + L-glutamate. The protein operates within amino-acid biosynthesis; L-histidine biosynthesis; L-histidine from 5-phospho-alpha-D-ribose 1-diphosphate: step 7/9. This is Histidinol-phosphate aminotransferase from Rubrobacter xylanophilus (strain DSM 9941 / JCM 11954 / NBRC 16129 / PRD-1).